Here is a 427-residue protein sequence, read N- to C-terminus: Peptidase B (427 aa).

Mn(2+) contacts are provided by Lys-195 and Asp-200. Residue Lys-207 is part of the active site. The Mn(2+) site is built by Asp-218, Asp-277, and Glu-279. Arg-281 is a catalytic residue.

Belongs to the peptidase M17 family. As to quaternary structure, homohexamer. The cofactor is Mn(2+).

It localises to the cytoplasm. It catalyses the reaction Release of an N-terminal amino acid, Xaa, from a peptide or arylamide. Xaa is preferably Glu or Asp but may be other amino acids, including Leu, Met, His, Cys and Gln.. Functionally, probably plays an important role in intracellular peptide degradation. The chain is Peptidase B from Salmonella dublin (strain CT_02021853).